Reading from the N-terminus, the 248-residue chain is MRFRVTPYHGNLLGDHERLAAFREAISSRARGLTYDLGAGSGILSFFASEYADRVIAIERDPKIAACAGENLSGLDNVSVVNEDALHYEFSAADTIICEMLDTALIDEEQVPVLRRALKFLRNDGTVIPQAVFNAAEPVTVNFENIMYDENLSQPSSGPMRVYDRVEFRGNLPEIFRGSLKLQASSPFNAIRIISFTLTAPGIICGPTPMMNPPLIIPLEETGDKGEVEIKLSYRMGGGLDSVEASII.

This sequence to M.jannaschii MJ1452.

This is an uncharacterized protein from Methanothermobacter thermautotrophicus (strain ATCC 29096 / DSM 1053 / JCM 10044 / NBRC 100330 / Delta H) (Methanobacterium thermoautotrophicum).